Here is a 41-residue protein sequence, read N- to C-terminus: Large ribosomal subunit protein bL36 (41 aa).

Belongs to the bacterial ribosomal protein bL36 family.

The polypeptide is Large ribosomal subunit protein bL36 (Beijerinckia indica subsp. indica (strain ATCC 9039 / DSM 1715 / NCIMB 8712)).